The chain runs to 227 residues: Esterase OVCA2 (227 aa).

Residues Ser120, Asp180, and His207 each act as charge relay system in the active site.

The protein belongs to the LovG family.

The catalysed reaction is a carboxylic ester + H2O = an alcohol + a carboxylate + H(+). In terms of biological role, exhibits ester hydrolase activity with a strong preference for long-chain alkyl ester substrates and high selectivity against a variety of short, branched, and substituted esters. Is able to hydrolyze ester bonds within a wide range of p-nitrophenyl derivatives (C2-C14) in vitro, with a strong preference toward substrates of &gt;8 carbons. The polypeptide is Esterase OVCA2 (ovca2) (Danio rerio (Zebrafish)).